Here is a 2293-residue protein sequence, read N- to C-terminus: Protein Ycf2 B (2293 aa).

An ATP-binding site is contributed by 1647-1654; it reads GSIGTGRS.

Belongs to the Ycf2 family.

Its subcellular location is the plastid. It localises to the chloroplast stroma. In terms of biological role, probable ATPase of unknown function. Its presence in a non-photosynthetic plant (Epifagus virginiana) and experiments in tobacco indicate that it has an essential function which is probably not related to photosynthesis. The sequence is that of Protein Ycf2 B from Crucihimalaya wallichii (Rock-cress).